A 530-amino-acid polypeptide reads, in one-letter code: Bifunctional purine biosynthesis protein PurH (530 aa).

Positions 1 to 149 constitute an MGS-like domain; sequence MASDFLPVHR…KNFARVAVAT (149 aa).

It belongs to the PurH family.

It catalyses the reaction (6R)-10-formyltetrahydrofolate + 5-amino-1-(5-phospho-beta-D-ribosyl)imidazole-4-carboxamide = 5-formamido-1-(5-phospho-D-ribosyl)imidazole-4-carboxamide + (6S)-5,6,7,8-tetrahydrofolate. It carries out the reaction IMP + H2O = 5-formamido-1-(5-phospho-D-ribosyl)imidazole-4-carboxamide. Its pathway is purine metabolism; IMP biosynthesis via de novo pathway; 5-formamido-1-(5-phospho-D-ribosyl)imidazole-4-carboxamide from 5-amino-1-(5-phospho-D-ribosyl)imidazole-4-carboxamide (10-formyl THF route): step 1/1. It functions in the pathway purine metabolism; IMP biosynthesis via de novo pathway; IMP from 5-formamido-1-(5-phospho-D-ribosyl)imidazole-4-carboxamide: step 1/1. The chain is Bifunctional purine biosynthesis protein PurH from Xylella fastidiosa (strain M12).